The chain runs to 837 residues: SLIT and NTRK-like protein 4 (837 aa).

The signal sequence occupies residues 1–18 (MFLWLFLIVSALISSTNA). The Extracellular portion of the chain corresponds to 19 to 618 (DSDISVEICN…SPPGGPVPLS (600 aa)). 6 LRR repeats span residues 60–81 (NFYH…TFVN), 84–105 (HAVS…AFLG), 108–129 (ALKQ…TFLG), 132–153 (NLEY…AFNK), 156–177 (KLKV…IFRF), and 179–200 (SLTH…GVLE). An N-linked (GlcNAc...) asparagine glycan is attached at Asn81. An LRRCT 1 domain is found at 213–264 (NPWNCSCDLLPLKAWLENMPYNIYIGEAICETPSDLYGRLLKETNKQELCPM). An N-linked (GlcNAc...) asparagine glycan is attached at Asn325. The LRRNT domain occupies 333-375 (QTRVPPLTPCPVPCFCKTHPSDLGLSVNCQEKNIQSMSELTPK). LRR repeat units follow at residues 378-399 (NAKK…DFTE), 402-423 (GLDL…VFHN), 426-447 (NLRR…IFSG), 450-471 (NLQY…TFDS), 474-495 (NLQL…IFSG), and 497-518 (PLAR…GVLD). Residue Asn423 is glycosylated (N-linked (GlcNAc...) asparagine). The region spanning 531 to 582 (NPWDCTCDLVALKLWLEKLNDGIVVKELKCETPVQFANIELKSLKNEILCPK) is the LRRCT 2 domain. A helical membrane pass occupies residues 619–639 (ILILSILVVLILTVFVAFCLL). At 640–837 (VFVLRRNKKP…LEEQTALNKI (198 aa)) the chain is on the cytoplasmic side.

This sequence belongs to the SLITRK family. In terms of assembly, interacts (via LRR 1 and 2 repeats) with PTPRD (via extracellular domain). As to expression, in the adult, significant expression is detected only in the brain. Broadly expressed in embryonic brain with highest expression in subventricular zone, subplate, cortical plate, pyramidal cell layer of hippocampus, thalamus and hypothalamus.

It localises to the membrane. Its subcellular location is the cell membrane. It is involved in synaptogenesis and promotes synapse differentiation. Suppresses neurite outgrowth. This is SLIT and NTRK-like protein 4 (Slitrk4) from Mus musculus (Mouse).